Consider the following 363-residue polypeptide: NudC domain-containing protein 3 (363 aa).

The interval 120–143 (AADLSGPQEVEKEEPPGSQDPEHT) is disordered. Residues 128–143 (EVEKEEPPGSQDPEHT) show a composition bias toward basic and acidic residues. Residues 187 to 279 (AIRENYIWSQ…VGEYWWSAIL (93 aa)) form the CS domain. Phosphoserine is present on residues serine 342 and serine 357.

In Mus musculus (Mouse), this protein is NudC domain-containing protein 3 (Nudcd3).